We begin with the raw amino-acid sequence, 140 residues long: Required for drug-induced death protein 1 (140 aa).

The segment at 1–95 is disordered; that stretch reads MTVGARLRSK…DKPKKRYRRK (95 aa). The span at 29-53 shows a compositional bias: acidic residues; the sequence is EETDAIVEHLEGEDEDPESQDCERE. The helical transmembrane segment at 118 to 140 threads the bilayer; the sequence is LQGFAAAYSAPFGVATSVVSFVR.

It is found in the membrane. In terms of biological role, regulates drug efflux through modulation of ABCB1 localization and activity. This is Required for drug-induced death protein 1 from Rattus norvegicus (Rat).